A 763-amino-acid polypeptide reads, in one-letter code: Endoplasmic reticulum membrane sensor NFE2L1 (763 aa).

A helical; Signal-anchor for type II membrane protein membrane pass occupies residues 7 to 24 (YLTEGLLQFTILLSLIGV). The segment at 108-150 (DPEGSVSGSQPSSGLALESSSGLQDVTGPDNGVRESETEQGFS) is disordered. The segment covering 116–131 (SQPSSGLALESSSGLQ) has biased composition (low complexity). A cholesterol recognition/amino acid consensus (CRAC) region region spans residues 180 to 188 (IFDYSHRQK). Asn-338 and Asn-350 each carry an N-linked (GlcNAc...) asparagine glycan. The interval 369–373 (SPEVE) is CPD. Asn-413 is a glycosylation site (N-linked (GlcNAc...) asparagine). Disordered stretches follow at residues 460-523 (EEEF…DSET) and 585-604 (TLKKGSKEKQADFLDKQMSR). The short motif at 466 to 470 (DSGLS) is the Destruction motif element. Over residues 466–514 (DSGLSLDSSHSPSSLSSSEGSSSSSSSSSSSSSSSASSSASSSFSEEGA) the composition is skewed to low complexity. The residue at position 519 (Ser-519) is a Phosphoserine; by CK2. Residues 589-604 (GSKEKQADFLDKQMSR) show a composition bias toward basic and acidic residues. Ser-590 carries the post-translational modification Phosphoserine; by PKA. Residues 645–708 (LIRDIRRRGK…RQMKQKVQSL (64 aa)) form the bZIP domain. Positions 647-666 (RDIRRRGKNKMAAQNCRKRK) are basic motif. Residues 673–687 (LERDVEDLQRDKARL) are leucine-zipper. The Nuclear localization signal signature appears at 752 to 759 (RRQERKPK).

The protein belongs to the bZIP family. CNC subfamily. Interacts with KEAP1. As to quaternary structure, interacts (via CPD region) with FBXW7; leading to its ubiquitination and degradation. Interacts with SYVN1/HRD1; leading to its ubiquitination and degradation. Interacts (when ubiquitinated) with DDI2; leading to its cleavage. In terms of assembly, interacts (via the bZIP domain) with small MAF protein (MAFF, MAFG or MAFK); required for binding to antioxidant response elements (AREs) on DNA. Interacts (via Destruction motif) with BTRC; leading to its ubiquitination and degradation. Interacts with CEBPB; the heterodimer represses expression of DSPP during odontoblast differentiation. Interacts with MOTS-c, a peptide produced by the mitochondrially encoded 12S rRNA MT-RNR1. Post-translationally, cleaved at Leu-104 by the aspartyl protease DDI2 following retrotranslocation, releasing the protein from the endoplasmic reticulum membrane and forming the transcription factor NRF1 that translocates into the nucleus. Ubiquitination is prerequisite for cleavage by aspartyl protease DDI2. N-glycosylated in normal conditions, when it has a single-pass type II membrane protein topology, with the DNA-binding domain facing the endoplasmic reticulum lumen. Deglycosylated during retrotranslocation to the cytosolic side of the membrane, to have a single-pass type III membrane protein topology with the major part of the protein facing the cytosol. In terms of processing, ubiquitinated by the SCF(FBXW7) complex and SYVN1/HRD1, leading to its degradation by the proteasome. Ubiquitinated during retrotranslocation to the cytosolic side of the membrane: ubiquitination does not lead to degradation and is required for processing by the aspartyl protease DDI2 and subsequent release from the endoplasmic reticulum membrane. Post-translationally, phosphorylation by CK2 at Ser-519 inhibits transcription factor activity, possibly by affecting DNA-binding activity. Phosphorylation at Ser-590 is required for interaction with CEBPB. Ubiquitinated by the SCF(BTRC) complex in the nucleus, leading to its degradation by the proteasome.

The protein localises to the endoplasmic reticulum membrane. Its subcellular location is the nucleus. Endoplasmic reticulum membrane sensor that translocates into the nucleus in response to various stresses to act as a transcription factor. Constitutes a precursor of the transcription factor NRF1. Able to detect various cellular stresses, such as cholesterol excess, oxidative stress or proteasome inhibition. In response to stress, it is released from the endoplasmic reticulum membrane following cleavage by the protease DDI2 and translocates into the nucleus to form the transcription factor NRF1. Acts as a key sensor of cholesterol excess: in excess cholesterol conditions, the endoplasmic reticulum membrane form of the protein directly binds cholesterol via its CRAC motif, preventing cleavage and release of the transcription factor NRF1, thereby allowing expression of genes promoting cholesterol removal, such as CD36. Involved in proteasome homeostasis: in response to proteasome inhibition, it is released from the endoplasmic reticulum membrane, translocates to the nucleus and activates expression of genes encoding proteasome subunits. In terms of biological role, CNC-type bZIP family transcription factor that translocates to the nucleus and regulates expression of target genes in response to various stresses. Heterodimerizes with small-Maf proteins (MAFF, MAFG or MAFK) and binds DNA motifs including the antioxidant response elements (AREs), which regulate expression of genes involved in oxidative stress response. Activates or represses expression of target genes, depending on the context. Plays a key role in cholesterol homeostasis by acting as a sensor of cholesterol excess: in low cholesterol conditions, translocates into the nucleus and represses expression of genes involved in defense against cholesterol excess, such as CD36. In excess cholesterol conditions, the endoplasmic reticulum membrane form of the protein directly binds cholesterol via its CRAC motif, preventing cleavage and release of the transcription factor NRF1, thereby allowing expression of genes promoting cholesterol removal. Critical for redox balance in response to oxidative stress: acts by binding the AREs motifs on promoters and mediating activation of oxidative stress response genes, such as GCLC, GCLM, GSS, MT1 and MT2. Plays an essential role during fetal liver hematopoiesis: probably has a protective function against oxidative stress and is involved in lipid homeostasis in the liver. Involved in proteasome homeostasis: in response to proteasome inhibition, mediates the 'bounce-back' of proteasome subunits by translocating into the nucleus and activating expression of genes encoding proteasome subunits. Also involved in regulating glucose flux. Together with CEBPB; represses expression of DSPP during odontoblast differentiation. In response to ascorbic acid induction, activates expression of SP7/Osterix in osteoblasts. This is Endoplasmic reticulum membrane sensor NFE2L1 from Bos taurus (Bovine).